The following is a 114-amino-acid chain: Superoxide dismutase [Cu-Zn] (114 aa).

Cu cation-binding residues include His37, His39, and His54. Positions 48 to 76 (CMSSGPHFNPRSKEHGAPTDENRHLGDLG) are disordered. Zn(2+) is bound by residues His54, His62, His71, and Asp74. Positions 58 to 73 (RSKEHGAPTDENRHLG) are enriched in basic and acidic residues. His111 provides a ligand contact to Cu cation.

It belongs to the Cu-Zn superoxide dismutase family. In terms of assembly, homodimer. The cofactor is Cu cation. Zn(2+) is required as a cofactor.

The protein localises to the cytoplasm. The enzyme catalyses 2 superoxide + 2 H(+) = H2O2 + O2. In terms of biological role, destroys radicals which are normally produced within the cells and which are toxic to biological systems. The sequence is that of Superoxide dismutase [Cu-Zn] from Drosophila obscura (Fruit fly).